Consider the following 831-residue polypeptide: uncharacterized protein (831 aa).

The disordered stretch occupies residues 285 to 311 (ALNLKRQQLKEEQKEQQSTGDRSDVST). 470 to 477 (GDTGNGKS) contacts ATP.

This is an uncharacterized protein from Bacillus subtilis (strain 168).